Consider the following 413-residue polypeptide: CinA-like protein (413 aa).

Belongs to the CinA family.

In Desulfosudis oleivorans (strain DSM 6200 / JCM 39069 / Hxd3) (Desulfococcus oleovorans), this protein is CinA-like protein.